We begin with the raw amino-acid sequence, 457 residues long: Argininosuccinate lyase (457 aa).

This sequence belongs to the lyase 1 family. Argininosuccinate lyase subfamily.

The protein resides in the cytoplasm. It catalyses the reaction 2-(N(omega)-L-arginino)succinate = fumarate + L-arginine. The protein operates within amino-acid biosynthesis; L-arginine biosynthesis; L-arginine from L-ornithine and carbamoyl phosphate: step 3/3. This is Argininosuccinate lyase from Escherichia coli O157:H7.